We begin with the raw amino-acid sequence, 201 residues long: Potassium-transporting ATPase KdpC subunit (201 aa).

Residues 13-33 form a helical membrane-spanning segment; sequence IIFMIFTILCGGIYTIFITGI.

Belongs to the KdpC family. In terms of assembly, the system is composed of three essential subunits: KdpA, KdpB and KdpC.

Its subcellular location is the cell membrane. In terms of biological role, part of the high-affinity ATP-driven potassium transport (or Kdp) system, which catalyzes the hydrolysis of ATP coupled with the electrogenic transport of potassium into the cytoplasm. This subunit acts as a catalytic chaperone that increases the ATP-binding affinity of the ATP-hydrolyzing subunit KdpB by the formation of a transient KdpB/KdpC/ATP ternary complex. In Clostridium botulinum (strain Eklund 17B / Type B), this protein is Potassium-transporting ATPase KdpC subunit.